Consider the following 616-residue polypeptide: MKNIISLVSKKKAASKNEDKNISESSRDIVNQQEVFNTEDFEEGKKDSAFELDHLEFTTNSAQLGDSDEDNENVINEMNATDDANEANSEEKSMTLKQALLKYPKAALWSILVSTTLVMEGYDTALLSALYALPVFQRKFGTLNGEGSYEITSQWQIGLNMCVLCGEMIGLQITTYMVEFMGNRYTMITALGLLTAYIFILYYCKSLAMIAVGQILSAIPWGCFQSLAVTYASEVCPLALRYYMTSYSNICWLFGQIFASGIMKNSQENLGNSDLGYKLPFALQWIWPAPLMIGIFFAPESPWWLVRKDRVAEARKSLSRILSGKGAEKDIQVDLTLKQIELTIEKERLLASKSGSFFNCFKGVNGRRTRLACLTWVAQNSSGAVLLGYSTYFFERAGMATDKAFTFSLIQYCLGLAGTLCSWVISGRVGRWTILTYGLAFQMVCLFIIGGMGFGSGSSASNGAGGLLLALSFFYNAGIGAVVYCIVAEIPSAELRTKTIVLARICYNLMAVINAILTPYMLNVSDWNWGAKTGLYWGGFTAVTLAWVIIDLPETTGRTFSEINELFNQGVPARKFASTVVDPFGKGKTQHDSLADESISQSSSIKQRELNAADKC.

The Cytoplasmic segment spans residues 1–115 (MKNIISLVSK…AALWSILVST (115 aa)). The segment covering 15–27 (SKNEDKNISESSR) has biased composition (basic and acidic residues). The segment at 15–40 (SKNEDKNISESSRDIVNQQEVFNTED) is disordered. The helical transmembrane segment at 116-136 (TLVMEGYDTALLSALYALPVF) threads the bilayer. Residues 137–160 (QRKFGTLNGEGSYEITSQWQIGLN) lie on the Extracellular side of the membrane. Residues 161–181 (MCVLCGEMIGLQITTYMVEFM) traverse the membrane as a helical segment. The Cytoplasmic portion of the chain corresponds to 182–191 (GNRYTMITAL). A helical membrane pass occupies residues 192–212 (GLLTAYIFILYYCKSLAMIAV). At 213–214 (GQ) the chain is on the extracellular side. The chain crosses the membrane as a helical span at residues 215–235 (ILSAIPWGCFQSLAVTYASEV). Topologically, residues 236–242 (CPLALRY) are cytoplasmic. Residues 243–263 (YMTSYSNICWLFGQIFASGIM) traverse the membrane as a helical segment. Residues 264–278 (KNSQENLGNSDLGYK) lie on the Extracellular side of the membrane. Residues 279–299 (LPFALQWIWPAPLMIGIFFAP) form a helical membrane-spanning segment. At 300 to 373 (ESPWWLVRKD…VNGRRTRLAC (74 aa)) the chain is on the cytoplasmic side. A helical transmembrane segment spans residues 374–394 (LTWVAQNSSGAVLLGYSTYFF). Over 395 to 404 (ERAGMATDKA) the chain is Extracellular. The chain crosses the membrane as a helical span at residues 405 to 425 (FTFSLIQYCLGLAGTLCSWVI). The Cytoplasmic segment spans residues 426–433 (SGRVGRWT). A helical membrane pass occupies residues 434–454 (ILTYGLAFQMVCLFIIGGMGF). Residues 455–466 (GSGSSASNGAGG) are Extracellular-facing. The chain crosses the membrane as a helical span at residues 467–487 (LLLALSFFYNAGIGAVVYCIV). At 488–504 (AEIPSAELRTKTIVLAR) the chain is on the cytoplasmic side. A helical membrane pass occupies residues 505–525 (ICYNLMAVINAILTPYMLNVS). The Extracellular segment spans residues 526–532 (DWNWGAK). A helical transmembrane segment spans residues 533–553 (TGLYWGGFTAVTLAWVIIDLP). Residues 554–616 (ETTGRTFSEI…QRELNAADKC (63 aa)) are Cytoplasmic-facing. A disordered region spans residues 587 to 616 (GKTQHDSLADESISQSSSIKQRELNAADKC). Over residues 606–616 (KQRELNAADKC) the composition is skewed to basic and acidic residues.

Belongs to the major facilitator superfamily. Sugar transporter (TC 2.A.1.1) family.

It localises to the cell membrane. Functionally, high-affinity uptake of alpha-glucosides such as maltose, turanose, isomaltose, alpha-methylglucoside, maltotriose, palatinose, trehalose, melezitose and glucose. Acts with the concomitant transport of protons into the cell (symport system). Provides an alternative and minor mechanism for growth on trehalose carbon source by transporting trehalose into the cytoplasm for conversion to glucose by neutral trehalase NTH1. The chain is General alpha-glucoside permease from Saccharomyces cerevisiae (strain CEN.PK113-7D) (Baker's yeast).